We begin with the raw amino-acid sequence, 430 residues long: 3-phosphoshikimate 1-carboxyvinyltransferase (430 aa).

The tract at residues 1 to 20 is disordered; it reads MHATVSPSRVRGRARAPPSK. Lysine 20, serine 21, and arginine 25 together coordinate 3-phosphoshikimate. Residue lysine 20 coordinates phosphoenolpyruvate. Phosphoenolpyruvate contacts are provided by glycine 91 and arginine 119. Positions 164, 165, 166, 192, 312, and 339 each coordinate 3-phosphoshikimate. Glutamine 166 provides a ligand contact to phosphoenolpyruvate. Aspartate 312 (proton acceptor) is an active-site residue. Residues arginine 343 and arginine 386 each coordinate phosphoenolpyruvate.

The protein belongs to the EPSP synthase family. As to quaternary structure, monomer.

It is found in the cytoplasm. It carries out the reaction 3-phosphoshikimate + phosphoenolpyruvate = 5-O-(1-carboxyvinyl)-3-phosphoshikimate + phosphate. The protein operates within metabolic intermediate biosynthesis; chorismate biosynthesis. Functionally, catalyzes the transfer of the enolpyruvyl moiety of phosphoenolpyruvate (PEP) to the 5-hydroxyl of shikimate-3-phosphate (S3P) to produce enolpyruvyl shikimate-3-phosphate and inorganic phosphate. In Halobacterium salinarum (strain ATCC 29341 / DSM 671 / R1), this protein is 3-phosphoshikimate 1-carboxyvinyltransferase.